Consider the following 430-residue polypeptide: Histidine--tRNA ligase (430 aa).

The protein belongs to the class-II aminoacyl-tRNA synthetase family. As to quaternary structure, homodimer.

It is found in the cytoplasm. It catalyses the reaction tRNA(His) + L-histidine + ATP = L-histidyl-tRNA(His) + AMP + diphosphate + H(+). In Acinetobacter baumannii (strain SDF), this protein is Histidine--tRNA ligase.